The chain runs to 105 residues: Large ribosomal subunit protein uL24 (105 aa).

Belongs to the universal ribosomal protein uL24 family. In terms of assembly, part of the 50S ribosomal subunit.

Functionally, one of two assembly initiator proteins, it binds directly to the 5'-end of the 23S rRNA, where it nucleates assembly of the 50S subunit. One of the proteins that surrounds the polypeptide exit tunnel on the outside of the subunit. This is Large ribosomal subunit protein uL24 from Xanthomonas axonopodis pv. citri (strain 306).